The sequence spans 164 residues: Peptide deformylase (164 aa).

Positions 87 and 129 each coordinate Fe cation. The active site involves glutamate 130. Histidine 133 provides a ligand contact to Fe cation.

The protein belongs to the polypeptide deformylase family. Fe(2+) serves as cofactor.

The enzyme catalyses N-terminal N-formyl-L-methionyl-[peptide] + H2O = N-terminal L-methionyl-[peptide] + formate. Functionally, removes the formyl group from the N-terminal Met of newly synthesized proteins. Requires at least a dipeptide for an efficient rate of reaction. N-terminal L-methionine is a prerequisite for activity but the enzyme has broad specificity at other positions. This chain is Peptide deformylase, found in Thermotoga petrophila (strain ATCC BAA-488 / DSM 13995 / JCM 10881 / RKU-1).